The chain runs to 309 residues: MENSTEVTEFILLGLTDDPNLQIPLLLAFLFIYLITLLGNGGMMVIIHSDSHLHTPMYFFLSNLSLVDLGYSSAVAPKTVAALRSGDKAISYDGCAAQFFFFVGFATVECYLLASMAYDRHAAVCRPLHYTTTMTAGVCALLATGSYVSGFLNASIHAAGTFRLSFCGSNEINHFFCDIPPLLALSCSDTRISKLVVFVAGFNVFFTLLVILISYFFICITIQRMHSAEGQKKVFSTCASHLTALSIFYGTIIFMYLQPNSSQSVDTDKIASVFYTVVIPMLNPLIYSLRNKEVKSALWKILNKLYPQY.

Over 1 to 26 (MENSTEVTEFILLGLTDDPNLQIPLL) the chain is Extracellular. A glycan (N-linked (GlcNAc...) asparagine) is linked at Asn3. A helical membrane pass occupies residues 27 to 47 (LAFLFIYLITLLGNGGMMVII). Residues 48 to 55 (HSDSHLHT) are Cytoplasmic-facing. Residues 56 to 76 (PMYFFLSNLSLVDLGYSSAVA) form a helical membrane-spanning segment. The Extracellular portion of the chain corresponds to 77–95 (PKTVAALRSGDKAISYDGC). Cys95 and Cys177 are oxidised to a cystine. The chain crosses the membrane as a helical span at residues 96–116 (AAQFFFFVGFATVECYLLASM). Over 117–137 (AYDRHAAVCRPLHYTTTMTAG) the chain is Cytoplasmic. Residues 138–158 (VCALLATGSYVSGFLNASIHA) traverse the membrane as a helical segment. Over 159 to 199 (AGTFRLSFCGSNEINHFFCDIPPLLALSCSDTRISKLVVFV) the chain is Extracellular. Residues 200 to 220 (AGFNVFFTLLVILISYFFICI) traverse the membrane as a helical segment. The Cytoplasmic portion of the chain corresponds to 221–235 (TIQRMHSAEGQKKVF). A helical transmembrane segment spans residues 236–256 (STCASHLTALSIFYGTIIFMY). Residues 257–270 (LQPNSSQSVDTDKI) lie on the Extracellular side of the membrane. Residue Asn260 is glycosylated (N-linked (GlcNAc...) asparagine). The chain crosses the membrane as a helical span at residues 271 to 291 (ASVFYTVVIPMLNPLIYSLRN). Over 292-309 (KEVKSALWKILNKLYPQY) the chain is Cytoplasmic.

This sequence belongs to the G-protein coupled receptor 1 family.

It localises to the cell membrane. Functionally, odorant receptor. This is Olfactory receptor 5B21 from Homo sapiens (Human).